A 362-amino-acid chain; its full sequence is Chorismate synthase (362 aa).

Residue R47 participates in NADP(+) binding. Residues 124–126, G286, 301–305, and R327 each bind FMN; these read RSS and KPTAT.

The protein belongs to the chorismate synthase family. In terms of assembly, homotetramer. FMNH2 serves as cofactor.

It carries out the reaction 5-O-(1-carboxyvinyl)-3-phosphoshikimate = chorismate + phosphate. The protein operates within metabolic intermediate biosynthesis; chorismate biosynthesis; chorismate from D-erythrose 4-phosphate and phosphoenolpyruvate: step 7/7. In terms of biological role, catalyzes the anti-1,4-elimination of the C-3 phosphate and the C-6 proR hydrogen from 5-enolpyruvylshikimate-3-phosphate (EPSP) to yield chorismate, which is the branch point compound that serves as the starting substrate for the three terminal pathways of aromatic amino acid biosynthesis. This reaction introduces a second double bond into the aromatic ring system. The protein is Chorismate synthase of Synechocystis sp. (strain ATCC 27184 / PCC 6803 / Kazusa).